The following is a 360-amino-acid chain: MEEKILMRVIVITVFLFIGAATAEDAAAEAYESPKLKKLITDCTGHVGETCSTTTSSSGSEALMQKQDGLALCLLDSMERCLLDHQTNVGTLGDLIILPPFPPRPPVDPNIIPFPRPPNIVPFSPRGRRSKLDNHQTDAGTLGKVIPLPPIRPGPPLKIIPFPGTNIVPFPRPPNIVPFPRRRRSKLDNHQTDAGTLGDLIILPPFPPRPPVDPNIIPFPRPPNIVPFSPRGRRSKLDNHQTDAGTLGRVIPLPPIRPGPPLKIIPFPGTNIVPFPKPYIPHSYNTITNLLGARRDQVQDLPLLIQTTQLRTVLGICSHVTARTCLTAPNVATSDLEACLTPSMNQCVYPPGAESGSPPI.

An N-terminal signal peptide occupies residues 1–23; that stretch reads MEEKILMRVIVITVFLFIGAATA. Disordered regions lie at residues 123–148 and 228–249; these read FSPRGRRSKLDNHQTDAGTLGKVIPL and FSPRGRRSKLDNHQTDAGTLGR.

The protein belongs to the nodulin 20 family.

The polypeptide is Nodulin-44 (Glycine max (Soybean)).